Consider the following 294-residue polypeptide: Probable 2-(5''-triphosphoribosyl)-3'-dephosphocoenzyme-A synthase (294 aa).

This sequence belongs to the CitG/MdcB family.

It carries out the reaction 3'-dephospho-CoA + ATP = 2'-(5''-triphospho-alpha-D-ribosyl)-3'-dephospho-CoA + adenine. The chain is Probable 2-(5''-triphosphoribosyl)-3'-dephosphocoenzyme-A synthase from Streptococcus pyogenes serotype M49 (strain NZ131).